An 876-amino-acid chain; its full sequence is Protein TORMOZ EMBRYO DEFECTIVE (876 aa).

WD repeat units lie at residues 58-97, 100-139, 142-183, 190-229, 255-294, 308-347, 356-396, 399-441, 444-484, 497-536, 539-580, 581-620, and 623-662; these read GESDTLTALALSPDDKLLFSAGHSRQIRVWDLETLKCIRS, GHEGPVMGMACHASGGLLATAGADRKVLVWDVDGGFCTHY, GHKG…TEKK, KHFSAVTSIALSEDGLTLFSAGRDKVVNLWDLHDYSCKAT, LDQKKSKKKESDSQATYFITVGERGVVRIWKSEGSICLYE, ESKRGFTAAAMLPSDHGLLCVTADQQFFFYSVVENVEETE, GYNE…CSYV, GHKE…CIGV, GHNG…EDSE, AHDKDINSVAVARNDSLVCTGSEDRTASIWRLPDLVHVVT, GHKR…KTFE, GHTSSVLRASFITDGTQFVSCGADGLLKLWNVNTSECIAT, and QHEDKVWALAVGKKTEMIATGGGDAVINLWHDSTASDKED. Residues 816 to 876 are disordered; it reads VETEYPKDEK…AEAQGSVIAV (61 aa). Over residues 819 to 831 the composition is skewed to basic and acidic residues; sequence EYPKDEKKKEKDV. A Nuclear localization signal motif is present at residues 848–855; that stretch reads SRKRKSQK. Residues 849–864 are compositionally biased toward basic residues; it reads RKRKSQKSKGKSNKKR.

As to expression, preferentially expressed in dividing cells in a variety of tissues and meristematic regions.

The protein localises to the nucleus. Its subcellular location is the nucleolus. Essential protein involved in the regulation of cell division planes during embryogenesis which defines cell patterning, especially longitudinal division planes of the proembryo, probably via the regulation of embryo patterning genes expression patterns. This chain is Protein TORMOZ EMBRYO DEFECTIVE, found in Arabidopsis thaliana (Mouse-ear cress).